The sequence spans 793 residues: MELRPWLLWVVAAAGALVLLAAEARGQKIFTNTWAVHISGGPAVADSVARKHGFHNLGQIFGDYYHFWHRAVTKRSLSPHRPRHSRLQRVPQVKWLEQQVAKQRAKRDVYQEPTDPKFPQQWYLSGVTQRDLNVKEAWAQGFTGRGIVVSILDDGIEKNHPDLAGNYDPGASFDVNDQDPDPQPRYTQMNDNRHGTRCAGEVAAVANNGVCGVGVAYNARIGGVRMLDGEVTDAVEARSLGLNPNHIHIYSASWGPEDDGKTVDGPARLAEEAFFRGVSQGRGGLGSIFVWASGNGGREHDSCNCDGYTNSIYTLSISSATQFGNVPWYSEACSSTLATTYSSGNQNEKQIVTTDLRQKCTESHTGTSASAPLAAGIIALTLEANKNLTWRDMQHLVVQTSKPAHLNANDWATNGVGRKVSHSYGYGLLDAGAMVALAQNWTTVAPQRKCIIEILAEPKDIGKRLEVRKTVTACLGEPNHISRLEHVQARLTLSYNRRGDLAIHLISPMGTRSTLLAARPHDYSADGFNDWAFMTTHSWDEDPSGEWVLEIENTSEANNYGTLTKFTLVLYGTASEGLSAPPESSGCKTLTSSQACVVCEEGFSLHQKSCVQRCPPGFTPQVLDTHYSTENDVEIIRASVCTPCHASCATCQGPAPTDCLSCPSHASLDPVEQTCSRQSQSSRESRPQQPPPALRPEVEVEPRLRAGLASHLPEVLAGLSCLIIALIFGIVFLFLHRCSGFSFRGVKVYTMDRGLISYKGLPPEAWQEECPSDSEEDEGRGERTAFIKDQSAL.

Residues 1–26 (MELRPWLLWVVAAAGALVLLAAEARG) form the signal peptide. The propeptide at 27 to 107 (QKIFTNTWAV…QQVAKQRAKR (81 aa)) is inhibition peptide. Topologically, residues 108–714 (DVYQEPTDPK…RAGLASHLPE (607 aa)) are lumenal. Residue aspartate 115 coordinates Ca(2+). Residues 121–435 (QWYLSGVTQR…YGLLDAGAMV (315 aa)) form the Peptidase S8 domain. The active-site Charge relay system is the aspartate 153. Aspartate 154 lines the substrate pocket. The interval 160–186 (HPDLAGNYDPGASFDVNDQDPDPQPRY) is disordered. Positions 162, 174, 179, and 181 each coordinate Ca(2+). A substrate-binding site is contributed by 191–192 (DN). Histidine 194 acts as the Charge relay system in catalysis. Ca(2+) is bound by residues valine 205, asparagine 208, valine 210, and glycine 212. 2 cysteine pairs are disulfide-bonded: cysteine 211-cysteine 360 and cysteine 303-cysteine 333. Substrate contacts are provided by residues glutamate 236, 253 to 258 (SWGPED), aspartate 264, and 292 to 295 (ASGN). Aspartate 258 contacts Ca(2+). A Ca(2+)-binding site is contributed by aspartate 301. Residues aspartate 306 and tyrosine 308 each coordinate substrate. Ca(2+) is bound at residue glutamate 331. The active-site Charge relay system is the serine 368. A substrate-binding site is contributed by serine 368. N-linked (GlcNAc...) asparagine glycans are attached at residues asparagine 387 and asparagine 440. The P/Homo B domain maps to 444–576 (VAPQRKCIIE…TLVLYGTASE (133 aa)). A disulfide bond links cysteine 450 and cysteine 474. The short motif at 498–500 (RGD) is the Cell attachment site element. N-linked (GlcNAc...) asparagine glycosylation occurs at asparagine 553. 2 FU repeats span residues 577-620 (GLSA…GFTP) and 638-681 (ASVC…QSQS). Residues 673 to 698 (QTCSRQSQSSRESRPQQPPPALRPEV) form a disordered region. A helical transmembrane segment spans residues 715-735 (VLAGLSCLIIALIFGIVFLFL). The Cytoplasmic segment spans residues 736–793 (HRCSGFSFRGVKVYTMDRGLISYKGLPPEAWQEECPSDSEEDEGRGERTAFIKDQSAL). Residues 758 to 761 (YKGL) form a cell surface signal region. Over residues 766–779 (WQEECPSDSEEDEG) the composition is skewed to acidic residues. Residues 766–793 (WQEECPSDSEEDEGRGERTAFIKDQSAL) are disordered. Phosphoserine occurs at positions 772 and 774. The short motif at 772-778 (SDSEEDE) is the Trans Golgi network signal element.

Belongs to the peptidase S8 family. Furin subfamily. Interacts with FLNA. Binds to PACS1 which mediates TGN localization and connection to clathrin adapters. Requires Ca(2+) as cofactor. Post-translationally, the inhibition peptide, which plays the role of an intramolecular chaperone, is autocatalytically removed in the endoplasmic reticulum (ER) and remains non-covalently bound to furin as a potent autoinhibitor. Following transport to the trans Golgi, a second cleavage within the inhibition propeptide results in propeptide dissociation and furin activation. In terms of processing, phosphorylation is required for TGN localization of the endoprotease. In vivo, exists as di-, mono- and non-phosphorylated forms. In terms of tissue distribution, cardiocytes (at protein level).

It localises to the golgi apparatus. The protein resides in the trans-Golgi network membrane. Its subcellular location is the cell membrane. It is found in the secreted. The protein localises to the endosome membrane. It catalyses the reaction Release of mature proteins from their proproteins by cleavage of -Arg-Xaa-Yaa-Arg-|-Zaa- bonds, where Xaa can be any amino acid and Yaa is Arg or Lys. Releases albumin, complement component C3 and von Willebrand factor from their respective precursors.. Its activity is regulated as follows. Inhibited by the not secondly cleaved propeptide. Inhibited by m-guanidinomethyl-phenylacetyl-Arg-Val-Arg-(amidomethyl)-benzamidine (m-guanidinomethyl-Phac-RVR-Amb) and 4-guanidinomethyl-phenylacetyl-Arg-Tle-Arg-4-amidinobenzylamide (MI-1148). Inhibited by Decanoyl-Arg-Val-Lys-Arg-chloromethylketone (decanoyl-RVKR-CMK). Inhibited by heparin/heparan sulfate-binding. In terms of biological role, ubiquitous endoprotease within constitutive secretory pathways capable of cleavage at the RX(K/R)R consensus motif. Mediates processing of TGFB1, an essential step in TGF-beta-1 activation. Converts through proteolytic cleavage the non-functional Brain natriuretic factor prohormone into its active hormone BNP(1-45). By mediating processing of accessory subunit ATP6AP1/Ac45 of the V-ATPase, regulates the acidification of dense-core secretory granules in islets of Langerhans cells. The polypeptide is Furin (Furin) (Rattus norvegicus (Rat)).